Here is a 20-residue protein sequence, read N- to C-terminus: Cytosol aminopeptidase (20 aa).

S6 carries the phosphoserine modification.

Belongs to the peptidase M17 family. In terms of assembly, homohexamer. It depends on Zn(2+) as a cofactor. Mn(2+) serves as cofactor.

The protein resides in the cytoplasm. It catalyses the reaction Release of an N-terminal amino acid, Xaa-|-Yaa-, in which Xaa is preferably Leu, but may be other amino acids including Pro although not Arg or Lys, and Yaa may be Pro. Amino acid amides and methyl esters are also readily hydrolyzed, but rates on arylamides are exceedingly low.. The enzyme catalyses an S-substituted L-cysteinylglycine + H2O = an S-substituted L-cysteine + glycine. It carries out the reaction L-cysteinylglycine + H2O = L-cysteine + glycine. The catalysed reaction is S-benzyl-L-cysteinylglycine + H2O = S-benzyl-L-cysteine + glycine. It catalyses the reaction Release of N-terminal proline from a peptide.. In terms of biological role, cytosolic metallopeptidase that catalyzes the removal of unsubstituted N-terminal hydrophobic amino acids from various peptides. The presence of Zn(2+) ions is essential for the peptidase activity, and the association with other cofactors can modulate the substrate spectificity of the enzyme. For instance, in the presence of Mn(2+), it displays a specific Cys-Gly hydrolyzing activity of Cys-Gly-S-conjugates. Involved in the metabolism of glutathione and in the degradation of glutathione S-conjugates, which may play a role in the control of the cell redox status. This is Cytosol aminopeptidase from Mesocricetus auratus (Golden hamster).